Consider the following 142-residue polypeptide: FAD synthase (142 aa).

ATP-binding positions include 9-10 (TF), 14-17 (HPGH), and Asp92.

It belongs to the archaeal FAD synthase family. In terms of assembly, homodimer. A divalent metal cation is required as a cofactor.

It carries out the reaction FMN + ATP + H(+) = FAD + diphosphate. Its pathway is cofactor biosynthesis; FAD biosynthesis; FAD from FMN: step 1/1. Functionally, catalyzes the transfer of the AMP portion of ATP to flavin mononucleotide (FMN) to produce flavin adenine dinucleotide (FAD) coenzyme. This chain is FAD synthase, found in Haloferax volcanii (strain ATCC 29605 / DSM 3757 / JCM 8879 / NBRC 14742 / NCIMB 2012 / VKM B-1768 / DS2) (Halobacterium volcanii).